The primary structure comprises 173 residues: MKKQIDKDYHLHIFHAKQCDPKKCTGKKMARFELARIFDKVQKIPRGSILLDPMAKQALSPADKHEQNITVLDCSWETVEEVFPHLMRLHLQHRALPYLVATNPVNFGRPFKLTSVEAFAAALYILGNKKQAEKILSKFNWGHVFLDMNKEPLEDYSKAKDSNEIIKIQSEYM.

T25, L72, L96, and S115 together coordinate S-adenosyl-L-methionine.

It belongs to the TDD superfamily. TSR3 family.

It localises to the cytoplasm. The enzyme catalyses an N(1)-methylpseudouridine in rRNA + S-adenosyl-L-methionine = N(1)-methyl-N(3)-[(3S)-3-amino-3-carboxypropyl]pseudouridine in rRNA + S-methyl-5'-thioadenosine + H(+). Its function is as follows. Aminocarboxypropyltransferase that catalyzes the aminocarboxypropyl transfer on pseudouridine corresponding to position 914 in M.jannaschii 16S rRNA. It constitutes the last step in biosynthesis of the hypermodified N1-methyl-N3-(3-amino-3-carboxypropyl) pseudouridine (m1acp3-Psi). The sequence is that of 16S rRNA aminocarboxypropyltransferase from Methanococcoides burtonii (strain DSM 6242 / NBRC 107633 / OCM 468 / ACE-M).